The sequence spans 199 residues: Thymidylate kinase (199 aa).

Residue 7 to 14 (GTEGVGKT) participates in ATP binding.

This sequence belongs to the thymidylate kinase family.

It carries out the reaction dTMP + ATP = dTDP + ADP. In terms of biological role, phosphorylation of dTMP to form dTDP in both de novo and salvage pathways of dTTP synthesis. This Acinetobacter baumannii (strain AB307-0294) protein is Thymidylate kinase.